The chain runs to 198 residues: MIEFVYPHTHLVAGVDEVGRGPLVGAVVTAAVILDPARPIVGLNDSKKLSEKRRLALYDEIKEKALSWSLGRAEPHEIDELNILHATMLAMQRAVAGLHIAPEYVLIDGNRCPALPVPSMAVVKGDSRVAEISAASILAKVTRDAEMAALDIIFPQYGFAQHKGYPTAFHLEKLAQYGATAHHRRSFAPVKRALELAS.

Positions 10–198 (HLVAGVDEVG…PVKRALELAS (189 aa)) constitute an RNase H type-2 domain. Residues Asp16, Glu17, and Asp108 each contribute to the a divalent metal cation site.

Belongs to the RNase HII family. Requires Mn(2+) as cofactor. Mg(2+) is required as a cofactor.

It is found in the cytoplasm. It catalyses the reaction Endonucleolytic cleavage to 5'-phosphomonoester.. Functionally, endonuclease that specifically degrades the RNA of RNA-DNA hybrids. This Salmonella arizonae (strain ATCC BAA-731 / CDC346-86 / RSK2980) protein is Ribonuclease HII.